The sequence spans 178 residues: Adenine phosphoribosyltransferase (178 aa).

Belongs to the purine/pyrimidine phosphoribosyltransferase family. Homodimer.

It is found in the cytoplasm. The catalysed reaction is AMP + diphosphate = 5-phospho-alpha-D-ribose 1-diphosphate + adenine. It functions in the pathway purine metabolism; AMP biosynthesis via salvage pathway; AMP from adenine: step 1/1. Catalyzes a salvage reaction resulting in the formation of AMP, that is energically less costly than de novo synthesis. This Cereibacter sphaeroides (strain ATCC 17025 / ATH 2.4.3) (Rhodobacter sphaeroides) protein is Adenine phosphoribosyltransferase.